A 493-amino-acid polypeptide reads, in one-letter code: Insulinoma-associated protein 2 (493 aa).

Positions Met-1–Arg-12 are enriched in basic residues. The SNAG domain stretch occupies residues Met-1–Arg-20. Residues Met-1–Gly-77 form a disordered region. A C2H2-type 1; atypical zinc finger spans residues Phe-203 to Cys-223. The C2H2-type 2 zinc finger occupies Tyr-231 to His-253. The interval Ser-248–Ala-310 is disordered. The span at Pro-267 to Pro-276 shows a compositional bias: pro residues. Basic and acidic residues predominate over residues Glu-283–His-294. C2H2-type zinc fingers lie at residues Phe-354–His-376, Phe-398–His-420, and Phe-452–His-475.

As to expression, expressed in spleen, stomach, liver, kidney and testis. In the pancreas, expressed in islet cells, including insulin-producing beta-cells, but not in acinar cells (at protein level). In the brain, expressed in the neuronal cells of the cerebral cortex, the Purkinje cells of the cerebellum and the hippocampal region including CA1 and CA3 (at protein level).

The protein localises to the cytoplasm. The protein resides in the nucleus. In terms of biological role, may function as a growth suppressor or tumor suppressor in liver cells and in certain neurons. In Mus musculus (Mouse), this protein is Insulinoma-associated protein 2 (Insm2).